Reading from the N-terminus, the 39-residue chain is Metallocarboxypeptidase inhibitor (39 aa).

Glutamine 1 carries the post-translational modification Pyrrolidone carboxylic acid. 3 cysteine pairs are disulfide-bonded: cysteine 8-cysteine 24, cysteine 12-cysteine 27, and cysteine 18-cysteine 34.

In terms of tissue distribution, highly concentrated in tubers. Closely related but distinct forms of MCPI are present in leaves, stems and buds.

Functionally, may play a defensive role against insect attacks. Inhibits A.aegypti carboxypeptidase CPB1. The polypeptide is Metallocarboxypeptidase inhibitor (Solanum tuberosum (Potato)).